A 700-amino-acid chain; its full sequence is Tectonic-2 (700 aa).

An N-terminal signal peptide occupies residues 1–25 (MGSLSPLSLLWGLLLLQGVLRPLRG). Residues 26 to 665 (DPVFIPPFIR…YYQGEPQSQC (640 aa)) lie on the Extracellular side of the membrane. Asparagine 76, asparagine 82, asparagine 146, asparagine 156, and asparagine 389 each carry an N-linked (GlcNAc...) asparagine glycan. The chain crosses the membrane as a helical span at residues 666 to 682 (VAKGLMLLSLLMLAILL). Residues 683-700 (RHPWVRMCKARDSAAIYH) lie on the Cytoplasmic side of the membrane.

This sequence belongs to the tectonic family. In terms of assembly, part of the tectonic-like complex (also named B9 complex). Significant expression is observed in brain, kidney and eye.

The protein localises to the membrane. The protein resides in the cytoplasm. It is found in the cytoskeleton. Its subcellular location is the cilium basal body. Component of the tectonic-like complex, a complex localized at the transition zone of primary cilia and acting as a barrier that prevents diffusion of transmembrane proteins between the cilia and plasma membranes. Required for hedgehog signaling transduction. The chain is Tectonic-2 (Tctn2) from Mus musculus (Mouse).